The following is a 482-amino-acid chain: Glycogen synthase (482 aa).

Lysine 21 is an ADP-alpha-D-glucose binding site.

Belongs to the glycosyltransferase 1 family. Bacterial/plant glycogen synthase subfamily.

It carries out the reaction [(1-&gt;4)-alpha-D-glucosyl](n) + ADP-alpha-D-glucose = [(1-&gt;4)-alpha-D-glucosyl](n+1) + ADP + H(+). Its pathway is glycan biosynthesis; glycogen biosynthesis. In terms of biological role, synthesizes alpha-1,4-glucan chains using ADP-glucose. This is Glycogen synthase from Clostridium perfringens (strain 13 / Type A).